A 560-amino-acid polypeptide reads, in one-letter code: Glycolate permease GlcA (560 aa).

Residues 1–13 lie on the Cytoplasmic side of the membrane; that stretch reads MVTWTQMYMPMGG. A helical membrane pass occupies residues 14–34; that stretch reads LGLSALVALIPIIFFFVALAV. At 35–41 the chain is on the periplasmic side; it reads LRLKGHV. A helical transmembrane segment spans residues 42 to 62; it reads AGAITLILSILIAIFAFKMPI. Topologically, residues 63–69 are cytoplasmic; the sequence is DMAFAAA. A helical transmembrane segment spans residues 70-90; sequence GYGFIYGLWPIAWIIVAAVFL. The Periplasmic portion of the chain corresponds to 91–130; it reads YKLTVASGQFDIIRSSVISITDDQRLQVLLIGFSFGALLE. The helical transmembrane segment at 131–151 threads the bilayer; sequence GAAGFGAPVAITGALLVGLGF. Residues 152-158 are Cytoplasmic-facing; it reads KPLYAAG. Residues 159–179 traverse the membrane as a helical segment; that stretch reads LCLIANTAPVAFGALGVPILV. At 180–199 the chain is on the periplasmic side; it reads AGQVTGIDPFHIGAMAGRQL. A helical transmembrane segment spans residues 200 to 220; the sequence is PFLSVLVPFWLVAMMDGWKGV. The Cytoplasmic portion of the chain corresponds to 221–225; the sequence is KETWP. A helical membrane pass occupies residues 226–246; sequence AALVAGGSFAVTQFFTSNYIG. The Periplasmic segment spans residues 247 to 248; sequence PE. The chain crosses the membrane as a helical span at residues 249–269; that stretch reads LPDITSALVSIVSLALFLKVW. The Cytoplasmic portion of the chain corresponds to 270–313; it reads RPKNTETAISMGQSAGAMVVNKPSSGGPVPSEYSLGQIIRAWSP. A helical transmembrane segment spans residues 314–334; the sequence is FLILTVLVTIWTMKPFKALFA. Residues 335 to 378 lie on the Periplasmic side of the membrane; that stretch reads PGGAFYSLVINFQIPHLHQQVLKAAPIVAQPTPMDAVFKFDPLS. Residues 379 to 399 traverse the membrane as a helical segment; the sequence is AGGTAIFIAAIISIFILGVGI. At 400 to 408 the chain is on the cytoplasmic side; the sequence is KKGIGVFAE. Residues 409-429 traverse the membrane as a helical segment; sequence TLISLKWPILSIGMVLAFAFV. Over 430 to 438 the chain is Periplasmic; that stretch reads TNYSGMSTT. The chain crosses the membrane as a helical span at residues 439–459; sequence LALVLAGTGVMFPFFSPFLGW. Residues 460–536 lie on the Cytoplasmic side of the membrane; sequence LGVFLTGSDT…ELFRYTVKHS (77 aa). The chain crosses the membrane as a helical span at residues 537–557; sequence LIFASVIGIITLLQAYVFTGM. Over 558–560 the chain is Periplasmic; that stretch reads LVS.

It belongs to the lactate permease family.

Its subcellular location is the cell inner membrane. The enzyme catalyses glycolate(in) + H(+)(in) = glycolate(out) + H(+)(out). It carries out the reaction (S)-lactate(in) + H(+)(in) = (S)-lactate(out) + H(+)(out). It catalyses the reaction (R)-lactate(in) + H(+)(in) = (R)-lactate(out) + H(+)(out). Its activity is regulated as follows. Inhibited by the proton ionophore carbonyl cyanide m-chlorophenylhydrazone (CCCP). Functionally, uptake of glycolate across the membrane. Can also transport L-lactate and D-lactate. Seems to be driven by a proton motive force. The chain is Glycolate permease GlcA from Escherichia coli (strain K12).